The following is a 553-amino-acid chain: Vacuolar fusion protein MON1 homolog B (553 aa).

Position 1 is an N-acetylmethionine (M1). Disordered stretches follow at residues 1–111 and 534–553; these read MEAG…DEDW and STPP…FTGL. Positions 23–35 are enriched in basic and acidic residues; the sequence is FPREEAGDSERVH. The segment covering 52–72 has biased composition (polar residues); that stretch reads KDQPSSLLSPLPQTEAASSTC. S57 carries the post-translational modification Phosphoserine. A compositionally biased stretch (low complexity) spans 78-95; that stretch reads AAASDSSPPGEPESNSEG. Positions 96 to 108 are enriched in acidic residues; that stretch reads QGEDPDDGGDPSD. The span at 541-553 shows a compositional bias: polar residues; that stretch reads ADQAPNNGLFTGL.

Belongs to the MON1/SAND family. Interacts with CCNT2; down-regulates CCNT2-mediated activation of viral promoters during herpes simplex virus 1/HHV-1 infection. Found in a complex with RMC1, CCZ1 MON1A and MON1B.

The polypeptide is Vacuolar fusion protein MON1 homolog B (Mon1b) (Mus musculus (Mouse)).